Reading from the N-terminus, the 167-residue chain is Mitochondrial inner membrane protease subunit 1 (167 aa).

Residues Ser-40 and Lys-83 contribute to the active site.

The protein belongs to the peptidase S26 family. IMP1 subfamily. As to quaternary structure, heterodimer of 2 subunits, IMMPL1 and IMMPL2.

It is found in the mitochondrion inner membrane. Functionally, catalyzes the removal of transit peptides required for the targeting of proteins from the mitochondrial matrix, across the inner membrane, into the inter-membrane space. This is Mitochondrial inner membrane protease subunit 1 (immp1l) from Xenopus tropicalis (Western clawed frog).